The sequence spans 340 residues: Eukaryotic translation initiation factor 3 subunit I (340 aa).

6 WD repeats span residues 8 to 47, 50 to 89, 91 to 135, 150 to 189, 194 to 233, and 291 to 330; these read GHER…RLGT, GHQG…CVKV, DFPT…GEGN, CEQS…QLQN, EFDY…VMKT, and GHFG…FDFM.

The protein belongs to the eIF-3 subunit I family. In terms of assembly, component of the eukaryotic translation initiation factor 3 (eIF-3) complex.

It is found in the cytoplasm. Component of the eukaryotic translation initiation factor 3 (eIF-3) complex, which is involved in protein synthesis of a specialized repertoire of mRNAs and, together with other initiation factors, stimulates binding of mRNA and methionyl-tRNAi to the 40S ribosome. The eIF-3 complex specifically targets and initiates translation of a subset of mRNAs involved in cell proliferation. This is Eukaryotic translation initiation factor 3 subunit I from Coccidioides immitis (strain RS) (Valley fever fungus).